The following is a 131-amino-acid chain: Profilin-3 (131 aa).

Cys13 and Cys115 form a disulfide bridge. Positions Ala81 to Thr97 match the Involved in PIP2 interaction motif. Phosphothreonine is present on Thr111.

The protein belongs to the profilin family. Occurs in many kinds of cells as a complex with monomeric actin in a 1:1 ratio. In terms of processing, phosphorylated by MAP kinases.

Its subcellular location is the cytoplasm. It localises to the cytoskeleton. Binds to actin and affects the structure of the cytoskeleton. At high concentrations, profilin prevents the polymerization of actin, whereas it enhances it at low concentrations. This chain is Profilin-3, found in Olea europaea (Common olive).